The primary structure comprises 446 residues: Signal recognition particle protein (446 aa).

GTP contacts are provided by residues 106 to 113, 188 to 192, and 246 to 249; these read GLQGSGKT, DTAGR, and SKLD.

This sequence belongs to the GTP-binding SRP family. SRP54 subfamily. In terms of assembly, part of the signal recognition particle protein translocation system, which is composed of SRP and FtsY.

The protein resides in the cytoplasm. The enzyme catalyses GTP + H2O = GDP + phosphate + H(+). In terms of biological role, involved in targeting and insertion of nascent membrane proteins into the cytoplasmic membrane. Binds to the hydrophobic signal sequence of the ribosome-nascent chain (RNC) as it emerges from the ribosomes. The SRP-RNC complex is then targeted to the cytoplasmic membrane where it interacts with the SRP receptor FtsY. This is Signal recognition particle protein from Mycoplasma genitalium (strain ATCC 33530 / DSM 19775 / NCTC 10195 / G37) (Mycoplasmoides genitalium).